Reading from the N-terminus, the 320-residue chain is Probable cell division protein WhiA (320 aa).

The segment at residues 282-315 (SLEELGRAARPQISKDAVAGRIRRLLQRAEKAEQ) is a DNA-binding region (H-T-H motif).

Belongs to the WhiA family.

Involved in cell division and chromosome segregation. The sequence is that of Probable cell division protein WhiA from Bifidobacterium animalis subsp. lactis (strain AD011).